Reading from the N-terminus, the 252-residue chain is Small ribosomal subunit protein uS3 (252 aa).

In terms of domain architecture, KH type-2 spans 39 to 109 (IRNYVQTRLK…EVKIDVVEVV (71 aa)). The span at 221–241 (EMKRIKERRSDSGPRSRNDRS) shows a compositional bias: basic and acidic residues. Residues 221–252 (EMKRIKERRSDSGPRSRNDRSQKRRRRPNDRG) form a disordered region. A compositionally biased stretch (basic residues) spans 242 to 252 (QKRRRRPNDRG).

Belongs to the universal ribosomal protein uS3 family. In terms of assembly, part of the 30S ribosomal subunit. Forms a tight complex with proteins S10 and S14.

Binds the lower part of the 30S subunit head. Binds mRNA in the 70S ribosome, positioning it for translation. In Chlorobium luteolum (strain DSM 273 / BCRC 81028 / 2530) (Pelodictyon luteolum), this protein is Small ribosomal subunit protein uS3.